The sequence spans 133 residues: Chromosome transmission fidelity protein 8 (133 aa).

The protein belongs to the CTF8 family. In terms of assembly, component of the CTF18-RFC complex, which consists of CTF18, CTF8, DSCC1, RFC2, RFC3, RFC4 and RFC5.

It localises to the nucleus. Functionally, essential for the fidelity of chromosome transmission. Required for the DNA replication block checkpoint. Component of the RFC-like complex CTF18-RFC which is required for efficient establishment of chromosome cohesion during S-phase and may load or unload POL30/PCNA. During a clamp loading circle, the RFC:clamp complex binds to DNA and the recognition of the double-stranded/single-stranded junction stimulates ATP hydrolysis by RFC. The complex presumably provides bipartite ATP sites in which one subunit supplies a catalytic site for hydrolysis of ATP bound to the neighboring subunit. Dissociation of RFC from the clamp leaves the clamp encircling DNA. The sequence is that of Chromosome transmission fidelity protein 8 (CTF8) from Saccharomyces cerevisiae (strain ATCC 204508 / S288c) (Baker's yeast).